Here is a 397-residue protein sequence, read N- to C-terminus: Riboflavin biosynthesis protein RibBA (397 aa).

The segment at M1–H199 is DHBP synthase. D-ribulose 5-phosphate is bound by residues R26 to E27, D31, R138 to T142, and E162. Mg(2+) is bound at residue E27. H141 provides a ligand contact to Mg(2+). The interval H200–L397 is GTP cyclohydrolase II. A GTP-binding site is contributed by R250 to E254. C255, C266, and C268 together coordinate Zn(2+). GTP contacts are provided by residues Q271, E293–R295, and T315. Catalysis depends on D327, which acts as the Proton acceptor; for GTP cyclohydrolase activity. Catalysis depends on R329, which acts as the Nucleophile; for GTP cyclohydrolase activity. Residues T350 and K355 each contribute to the GTP site.

The protein in the N-terminal section; belongs to the DHBP synthase family. It in the C-terminal section; belongs to the GTP cyclohydrolase II family. The cofactor is Mg(2+). Mn(2+) serves as cofactor. It depends on Zn(2+) as a cofactor.

The enzyme catalyses D-ribulose 5-phosphate = (2S)-2-hydroxy-3-oxobutyl phosphate + formate + H(+). It carries out the reaction GTP + 4 H2O = 2,5-diamino-6-hydroxy-4-(5-phosphoribosylamino)-pyrimidine + formate + 2 phosphate + 3 H(+). It participates in cofactor biosynthesis; riboflavin biosynthesis; 2-hydroxy-3-oxobutyl phosphate from D-ribulose 5-phosphate: step 1/1. The protein operates within cofactor biosynthesis; riboflavin biosynthesis; 5-amino-6-(D-ribitylamino)uracil from GTP: step 1/4. In terms of biological role, catalyzes the conversion of D-ribulose 5-phosphate to formate and 3,4-dihydroxy-2-butanone 4-phosphate. Its function is as follows. Catalyzes the conversion of GTP to 2,5-diamino-6-ribosylamino-4(3H)-pyrimidinone 5'-phosphate (DARP), formate and pyrophosphate. The polypeptide is Riboflavin biosynthesis protein RibBA (Bacillus cereus (strain B4264)).